Consider the following 209-residue polypeptide: Probable transcriptional regulator ycf29 (209 aa).

The Response regulatory domain occupies 4-120; it reads NLMLVENDTV…ELVSLIKNLI (117 aa). Aspartate 53 bears the 4-aspartylphosphate mark. In terms of domain architecture, HTH luxR-type spans 139 to 204; the sequence is PLFQLLYLTP…LLVKYSIKNN (66 aa).

The protein resides in the plastid. It localises to the chloroplast. This is Probable transcriptional regulator ycf29 (ycf29) from Porphyra purpurea (Red seaweed).